The chain runs to 236 residues: SERTA domain-containing protein 1 (236 aa).

The 48-residue stretch at 38 to 85 (PTVASSSLFDLSVVKLHHSLRQSEPDLRHLVLVVNTLRRIQASMEPAP) folds into the SERTA domain. The segment at 190-211 (ASEGLKPGPENGPAKEEPPELD) is disordered.

Interacts with the PHD-bromodomain of TIF1, TRIM28/TIF1B and p300/CBP. Interacts with E2F1 and TFDP1; modulates transactivation activity of TFDP1/E2F complexes. Also interacts with CDK4. Polyubiquitinated, which promotes proteasomal degradation. Detected at in testis, lung and, at lower levels, in muscle, liver, spleen, brain and heart.

Functionally, acts at E2F-responsive promoters as coregulator to integrate signals provided by PHD- and/or bromodomain-containing transcription factors. Stimulates E2F1/TFDP1 transcriptional activity. Renders the activity of cyclin D1/CDK4 resistant to the inhibitory effects of CDKN2A/p16INK4A. The chain is SERTA domain-containing protein 1 (Sertad1) from Mus musculus (Mouse).